A 238-amino-acid polypeptide reads, in one-letter code: MKFSPSLLRGTLIKRYKRFFADVELEDGTIVTAHCPNTGAMSGCAEPGYTVFLSESTNPKRKLKYTWELAQTFDGHFIGINTHNANKLVAEALDNKVLKEFSDITRWKAEVTPPTANSRFDFALERENTQHQGIIEYMEVKSVTLAENSKGFFPDAVTQRGAKHCLELARLAESGIKTSLLFCVQHTAIESVQVAEYIDPTYAESVKKAADAGVSLLAASCIIDEQKILLNQTLPLIL.

Belongs to the SfsA family.

In Alteromonas mediterranea (strain DSM 17117 / CIP 110805 / LMG 28347 / Deep ecotype), this protein is Sugar fermentation stimulation protein homolog.